The sequence spans 517 residues: Crotonobetaine/carnitine--CoA ligase (517 aa).

It belongs to the ATP-dependent AMP-binding enzyme family.

The enzyme catalyses 4-(trimethylamino)butanoate + ATP + CoA = 4-(trimethylamino)butanoyl-CoA + AMP + diphosphate. It carries out the reaction crotonobetaine + ATP + CoA = crotonobetainyl-CoA + AMP + diphosphate. The catalysed reaction is (R)-carnitine + ATP + CoA = (R)-carnitinyl-CoA + AMP + diphosphate. It functions in the pathway amine and polyamine metabolism; carnitine metabolism. In terms of biological role, catalyzes the transfer of CoA to carnitine, generating the initial carnitinyl-CoA needed for the CaiB reaction cycle. Also has activity toward crotonobetaine and gamma-butyrobetaine. In Salmonella heidelberg (strain SL476), this protein is Crotonobetaine/carnitine--CoA ligase.